A 186-amino-acid chain; its full sequence is Alpha/beta-gliadin clone PTO-A10 (186 aa).

The disordered stretch occupies residues 1 to 20; the sequence is PQPQPQYSQPQQPISQQQQQ.

Belongs to the gliadin/glutenin family. Post-translationally, substrate of transglutaminase.

Its function is as follows. Gliadin is the major seed storage protein in wheat. The sequence is that of Alpha/beta-gliadin clone PTO-A10 from Triticum aestivum (Wheat).